A 48-amino-acid polypeptide reads, in one-letter code: NVYQYRKMLQCAMPNGGPFECCQTHDNCYGEAEKLKACTSTHSSPYFK.

H25 is an active-site residue. Residue D26 coordinates Ca(2+).

It belongs to the phospholipase A2 family. Group I subfamily. D49 sub-subfamily. As to quaternary structure, monomer. Ca(2+) serves as cofactor. In terms of tissue distribution, expressed by the venom gland.

Its subcellular location is the secreted. The enzyme catalyses a 1,2-diacyl-sn-glycero-3-phosphocholine + H2O = a 1-acyl-sn-glycero-3-phosphocholine + a fatty acid + H(+). Phospholipase A2 with weak enzymatic activity, which partially inhibits thrombin enzymatic activity (Ki=73 nM), completely inhibits thrombin-induced platelet aggregation and retards fibrin clot formation (IC(50)=0.2 nM). May exert this anticoagulant effect through a non-enzymatic mechanism. The protein is Phospholipase A2 TI-Nh of Naja haje haje (Egyptian cobra).